The sequence spans 101 residues: Large ribosomal subunit protein uL23 (101 aa).

The protein belongs to the universal ribosomal protein uL23 family. As to quaternary structure, part of the 50S ribosomal subunit. Contacts protein L29, and trigger factor when it is bound to the ribosome.

One of the early assembly proteins it binds 23S rRNA. One of the proteins that surrounds the polypeptide exit tunnel on the outside of the ribosome. Forms the main docking site for trigger factor binding to the ribosome. This Corynebacterium jeikeium (strain K411) protein is Large ribosomal subunit protein uL23.